Reading from the N-terminus, the 183-residue chain is Maltose O-acetyltransferase (183 aa).

Acetyl-CoA is bound at residue Asn-83. The active-site Proton donor/acceptor is the His-113. Residues Gly-140, Ser-158, 163-164 (TK), Arg-178, and Lys-181 each bind acetyl-CoA.

Belongs to the transferase hexapeptide repeat family. Homodimer.

The catalysed reaction is D-maltose + acetyl-CoA = 1-O-acetylmaltose + CoA. In terms of biological role, catalyzes the CoA-dependent transfer of an acetyl group to maltose and other sugars. Acetylates glucose exclusively at the C6 position and maltose at the C6 position of the non-reducing end glucosyl moiety. Is able to acetylate maltooligosaccharides. This chain is Maltose O-acetyltransferase (maa), found in Escherichia coli (strain K12).